Consider the following 166-residue polypeptide: MSEAIIAKKAEQVELIAEKMKAAASIVVVDSRGLTVEQDTNLRRSLRESDVEFKVIKNSILIRAAEKAGLEDLKELFVGPSAVAFSNEDVIAPAKVISDFAKDAEALEIKGGSVDGKFTSVEEINALAKLPNKEGMLSMLLSVLQAPVRNVAYAVKAVAEKDEEVA.

It belongs to the universal ribosomal protein uL10 family. Part of the ribosomal stalk of the 50S ribosomal subunit. The N-terminus interacts with L11 and the large rRNA to form the base of the stalk. The C-terminus forms an elongated spine to which L12 dimers bind in a sequential fashion forming a multimeric L10(L12)X complex.

Forms part of the ribosomal stalk, playing a central role in the interaction of the ribosome with GTP-bound translation factors. The protein is Large ribosomal subunit protein uL10 of Streptococcus agalactiae serotype III (strain NEM316).